Reading from the N-terminus, the 368-residue chain is MSRNIIPKTTYQEIMLSGHPMIDVRAPIEFDKGAFPSSSNFPLMQDSERQRVGTCYKEQGQDAAIALGHSLVNGKVKQQRVDAWLAFIKQHPDAYLYCFRGGLRSQLSQQWIKEAGVDIPYVEGGYKAMRQYLIEVIDNAPAKQPVFILSGITGSGKTDFLLQRSEAVDLEGYAHHRGSSFGRYHEGQPTQINFENQLAVALLKHQERKEQCLLVEDESFLIGRSAIPKAFYEGMQNADILVLEEPEETRLTRLLNEYVHKMHSGYVERLGEEAGFTAFSEYLSQSITSIKKRLGSQLHDEFQTIISKALNMQLQQNDTQGHLEWISLLLTRYYDPMYQYQLEQKQERVIFKGSHQAMHEWLDHYRNR.

The Rhodanese domain occupies 15–138 (MLSGHPMIDV…MRQYLIEVID (124 aa)). The active-site S-selanylcysteine intermediate is cysteine 98.

Belongs to the SelU family. As to quaternary structure, monomer.

It catalyses the reaction 5-methylaminomethyl-2-thiouridine(34) in tRNA + selenophosphate + (2E)-geranyl diphosphate + H2O + H(+) = 5-methylaminomethyl-2-selenouridine(34) in tRNA + (2E)-thiogeraniol + phosphate + diphosphate. It carries out the reaction 5-methylaminomethyl-2-thiouridine(34) in tRNA + (2E)-geranyl diphosphate = 5-methylaminomethyl-S-(2E)-geranyl-thiouridine(34) in tRNA + diphosphate. The catalysed reaction is 5-methylaminomethyl-S-(2E)-geranyl-thiouridine(34) in tRNA + selenophosphate + H(+) = 5-methylaminomethyl-2-(Se-phospho)selenouridine(34) in tRNA + (2E)-thiogeraniol. The enzyme catalyses 5-methylaminomethyl-2-(Se-phospho)selenouridine(34) in tRNA + H2O = 5-methylaminomethyl-2-selenouridine(34) in tRNA + phosphate. Its function is as follows. Involved in the post-transcriptional modification of the uridine at the wobble position (U34) of tRNA(Lys), tRNA(Glu) and tRNA(Gln). Catalyzes the conversion of 2-thiouridine (S2U-RNA) to 2-selenouridine (Se2U-RNA). Acts in a two-step process involving geranylation of 2-thiouridine (S2U) to S-geranyl-2-thiouridine (geS2U) and subsequent selenation of the latter derivative to 2-selenouridine (Se2U) in the tRNA chain. This is tRNA 2-selenouridine synthase from Shewanella woodyi (strain ATCC 51908 / MS32).